Here is a 641-residue protein sequence, read N- to C-terminus: Soluble starch synthase 1, chloroplastic/amyloplastic (641 aa).

A chloroplast-targeting transit peptide spans 1–113 (MATAAGMGIG…DSIDKTIFVA (113 aa)). The tract at residues 62–96 (TFLVPTSTPPAPTQSPAPAPTPPPLPDSGVGEIEP) is disordered. Residues 68–87 (STPPAPTQSPAPAPTPPPLP) are compositionally biased toward pro residues. Residue Lys-147 participates in ADP-alpha-D-glucose binding.

The protein belongs to the glycosyltransferase 1 family. Bacterial/plant glycogen synthase subfamily. Leaves and immature seeds.

The protein localises to the plastid. The protein resides in the chloroplast. It localises to the amyloplast. The catalysed reaction is [(1-&gt;4)-alpha-D-glucosyl](n) + ADP-alpha-D-glucose = [(1-&gt;4)-alpha-D-glucosyl](n+1) + ADP + H(+). It functions in the pathway glycan biosynthesis; starch biosynthesis. In terms of biological role, involved in starch synthesis in endosperm amyloplasts. Plays a role in the elongation of amylopectin chains. Synthesizes preferentially amylopectin chains with a degree of polymerization (DP) of 7 to 11 by elongating chains with a DP of 4 to 7. Generates distincly chains with a DP of 8 to 12 chains from short chains with a DP of 6 to 7. The protein is Soluble starch synthase 1, chloroplastic/amyloplastic of Oryza sativa subsp. japonica (Rice).